The primary structure comprises 274 residues: Large ribosomal subunit protein uL2 (274 aa).

Residues 195–274 (VGNSDHGLES…SKYIIERRKK (80 aa)) are disordered. 2 stretches are compositionally biased toward basic residues: residues 209–220 (GRSRWQGRRPRN) and 244–264 (PRSR…KKQS).

It belongs to the universal ribosomal protein uL2 family. Part of the 50S ribosomal subunit. Forms a bridge to the 30S subunit in the 70S ribosome.

Its function is as follows. One of the primary rRNA binding proteins. Required for association of the 30S and 50S subunits to form the 70S ribosome, for tRNA binding and peptide bond formation. It has been suggested to have peptidyltransferase activity; this is somewhat controversial. Makes several contacts with the 16S rRNA in the 70S ribosome. This is Large ribosomal subunit protein uL2 from Bacteroides fragilis (strain ATCC 25285 / DSM 2151 / CCUG 4856 / JCM 11019 / LMG 10263 / NCTC 9343 / Onslow / VPI 2553 / EN-2).